We begin with the raw amino-acid sequence, 268 residues long: Energy-coupling factor transporter transmembrane protein EcfT (268 aa).

A run of 6 helical transmembrane segments spans residues 26 to 46, 47 to 67, 73 to 93, 116 to 136, 151 to 171, and 246 to 266; these read ILAV…LSYG, ILIG…GLLL, LWII…GEAL, LVLL…IVLT, VPAH…PTLL, and ALTG…RWGI.

The protein belongs to the energy-coupling factor EcfT family. As to quaternary structure, forms a stable energy-coupling factor (ECF) transporter complex composed of 2 membrane-embedded substrate-binding proteins (S component), 2 ATP-binding proteins (A component) and 2 transmembrane proteins (T component). May be able to interact with more than 1 S component at a time.

It is found in the cell membrane. Its function is as follows. Transmembrane (T) component of an energy-coupling factor (ECF) ABC-transporter complex. Unlike classic ABC transporters this ECF transporter provides the energy necessary to transport a number of different substrates. The polypeptide is Energy-coupling factor transporter transmembrane protein EcfT (Acidaminococcus fermentans (strain ATCC 25085 / DSM 20731 / CCUG 9996 / CIP 106432 / VR4)).